The sequence spans 157 residues: uncharacterized protein (157 aa).

The N-acetyltransferase domain maps to 9–146 (LLINYKTLDE…GDFYVWHPET (138 aa)).

This is an uncharacterized protein from Bacillus cereus (strain ATCC 10987 / NRS 248).